Reading from the N-terminus, the 476-residue chain is Tryptophan--tRNA ligase, cytoplasmic (476 aa).

Residues 1-117 are dispensable to the catalytic activity; the sequence is MADMSNGEQG…LIVRFGSSKI (117 aa). The region spanning 13 to 69 is the WHEP-TRS domain; sequence SPLELFHSIAAQGELVRDLKARNAAKDEIDSAVKMLLSLKTSYKAATGEDYKVDCPP. The tract at residues 63–83 is disordered; that stretch reads YKVDCPPGDPAPESGEGLDAT. Lys159 is subject to N6-succinyllysine. The 'HIGH' region signature appears at 169–178; that stretch reads PSSEAMHVGH. Positions 354–358 match the 'KMSKS' region motif; sequence KMSAS. Ser356 is subject to Phosphoserine.

The protein belongs to the class-I aminoacyl-tRNA synthetase family. Homodimer. Interacts with oxidized form of GAPDH. Proteolytic cleavage generates 2 forms; T1-TrpRS and T2-TrpRS.

It localises to the cytoplasm. The catalysed reaction is tRNA(Trp) + L-tryptophan + ATP = L-tryptophyl-tRNA(Trp) + AMP + diphosphate + H(+). T1-TrpRS has aminoacylation activity while T2-TrpRS lacks it. T1-TrpRS and T2-TrpRS possess angiostatic activity. T2-TrpRS inhibits fluid shear stress-activated responses of endothelial cells. Regulates ERK, Akt, and eNOS activation pathways that are associated with angiogenesis, cytoskeletal reorganization and shear stress-responsive gene expression. This is Tryptophan--tRNA ligase, cytoplasmic (WARS1) from Bos taurus (Bovine).